Consider the following 187-residue polypeptide: CASP-like protein 3A2 (187 aa).

Residues 1–24 (MTSNGEGGEVVAKRRRKGIKELVQ) are Cytoplasmic-facing. A helical membrane pass occupies residues 25 to 45 (VALRGGCLAASATAMAVMLTA). Over 46–71 (TEEGVADIYGFKLTLSSNWSFSPSYQ) the chain is Extracellular. N-linked (GlcNAc...) asparagine glycosylation is present at asparagine 63. A helical transmembrane segment spans residues 72 to 92 (YVVGACAGTVLYSLLQLCLGV). Residues 93 to 107 (YRLVTGSPITPSRFQ) are Cytoplasmic-facing. A helical membrane pass occupies residues 108–128 (AWLCFTSDQLFCYLMMSAGSA). The Extracellular segment spans residues 129–162 (GSGVTNLNKTGIRHTPLPDFCKTLSSFCNHVALS). Residue asparagine 136 is glycosylated (N-linked (GlcNAc...) asparagine). A helical membrane pass occupies residues 163–183 (LLLVFLSFIFLASSSFFTVLV). Topologically, residues 184-187 (LSTP) are cytoplasmic.

Belongs to the Casparian strip membrane proteins (CASP) family. Homodimer and heterodimers.

Its subcellular location is the cell membrane. The protein is CASP-like protein 3A2 of Arabidopsis thaliana (Mouse-ear cress).